Here is a 606-residue protein sequence, read N- to C-terminus: Medium-chain acyl-CoA ligase ACSF2, mitochondrial (606 aa).

The transit peptide at Met-1–Ser-13 directs the protein to the mitochondrion. ATP contacts are provided by residues Thr-256–Lys-264, Asp-484, Arg-499, and Lys-590.

The protein belongs to the ATP-dependent AMP-binding enzyme family.

The protein resides in the mitochondrion. It carries out the reaction a medium-chain fatty acid + ATP + CoA = a medium-chain fatty acyl-CoA + AMP + diphosphate. The catalysed reaction is octanoate + ATP + CoA = octanoyl-CoA + AMP + diphosphate. Acyl-CoA synthases catalyze the initial reaction in fatty acid metabolism, by forming a thioester with CoA. Has some preference toward medium-chain substrates. Plays a role in adipocyte differentiation. The sequence is that of Medium-chain acyl-CoA ligase ACSF2, mitochondrial from Danio rerio (Zebrafish).